The primary structure comprises 592 residues: Insulin-like growth factor 2 mRNA-binding protein 2 (592 aa).

RRM domains lie at 3–76 (NKLY…YSVS) and 82–157 (RRIQ…YIPD). Phosphoserine is present on S11. The disordered stretch occupies residues 157-182 (DEEVSSPSPPHRAREQGHGPGSSSQA). 2 positions are modified to phosphoserine: S162 and S164. KH domains follow at residues 186-251 (DFPL…CRMI), 267-334 (EVPL…EIEI), 420-485 (QETV…QGRI), and 502-568 (KLEA…QRKI). The residue at position 543 (T543) is a Phosphothreonine.

Belongs to the RRM IMP/VICKZ family. As to quaternary structure, can form homooligomers and heterooligomers with IGF2BP1 and IGF2BP3 in an RNA-dependent manner. Interacts with HNRPD. Interacts with IGF2BP1. Interacts with ELAVL1, DHX9, HNRNPU, MATR3 and PABPC1. Expressed in oocytes, granulosa cells of small and growing follicles and Leydig cells of the testis (at protein level). Expressed in testis and ovary.

The protein localises to the nucleus. It is found in the cytoplasm. It localises to the P-body. The protein resides in the stress granule. Its function is as follows. RNA-binding factor that recruits target transcripts to cytoplasmic protein-RNA complexes (mRNPs). This transcript 'caging' into mRNPs allows mRNA transport and transient storage. It also modulates the rate and location at which target transcripts encounter the translational apparatus and shields them from endonuclease attacks or microRNA-mediated degradation. Preferentially binds to N6-methyladenosine (m6A)-containing mRNAs and increases their stability. Binds to the 5'-UTR of the insulin-like growth factor 2 (IGF2) mRNAs. Binding is isoform-specific. Binds to beta-actin/ACTB and MYC transcripts. Increases MYC mRNA stability by binding to the coding region instability determinant (CRD) and binding is enhanced by m6A-modification of the CRD. The protein is Insulin-like growth factor 2 mRNA-binding protein 2 (Igf2bp2) of Mus musculus (Mouse).